We begin with the raw amino-acid sequence, 358 residues long: Sulfate/thiosulfate import ATP-binding protein CysA (358 aa).

Positions 3–237 (IKIENLEKHF…PQTPFVTQFV (235 aa)) constitute an ABC transporter domain. Residue 35–42 (GPSGCGKT) participates in ATP binding.

The protein belongs to the ABC transporter superfamily. Sulfate/tungstate importer (TC 3.A.1.6) family. The complex is composed of two ATP-binding proteins (CysA), two transmembrane proteins (CysT and CysW) and a solute-binding protein (CysP).

Its subcellular location is the cell inner membrane. It catalyses the reaction sulfate(out) + ATP + H2O = sulfate(in) + ADP + phosphate + H(+). The enzyme catalyses thiosulfate(out) + ATP + H2O = thiosulfate(in) + ADP + phosphate + H(+). In terms of biological role, part of the ABC transporter complex CysAWTP involved in sulfate/thiosulfate import. Responsible for energy coupling to the transport system. This chain is Sulfate/thiosulfate import ATP-binding protein CysA, found in Mannheimia succiniciproducens (strain KCTC 0769BP / MBEL55E).